The chain runs to 372 residues: MPYLGLLNKDEVLPPQVPAGTTVECPACGEGMSVVRSYNRGSTFVSRHFSHKGGGKGGGSGAGSNDGGCSGESEMHHKMKAIAYARLENDYPEATIELESNLEGRIPDVLLEFPEPCSPYGKGIAVEAQYQNKGKDKAAVVEHYLDREYSVAWLEEDAFSTHDVDLSGILSVWPYALPDRYETEGYPDVTRWLWQEKNPTVEMEIPIPADYWMSFDKSGEWVTIAEKSIKRRGSARISRTPDGHLTFSLGKAKGWGESESLSVQVVPNDVLKLRSFADDLERKAFGEDRPSPEECDPEWHELSKRWFKGSPTVTAWITAALPDPDGDSDVVVTLWKKQKETERVAMRVESYAAENLRDLADLLDRAFEIEKS.

The disordered stretch occupies residues 49 to 72 (FSHKGGGKGGGSGAGSNDGGCSGE). Residues 55 to 70 (GKGGGSGAGSNDGGCS) show a composition bias toward gly residues.

This is an uncharacterized protein from Halorubrum lacusprofundi (strain ATCC 49239 / DSM 5036 / JCM 8891 / ACAM 34).